The following is a 485-amino-acid chain: Cysteine--tRNA ligase (485 aa).

A Zn(2+)-binding site is contributed by Cys-29. The 'HIGH' region motif lies at 31–41 (VTVYDHCHIGH). Residues Cys-209, His-234, and Glu-238 each contribute to the Zn(2+) site. The 'KMSKS' region motif lies at 266-270 (KMSKS). Residue Lys-269 participates in ATP binding.

It belongs to the class-I aminoacyl-tRNA synthetase family. In terms of assembly, monomer. Requires Zn(2+) as cofactor.

It is found in the cytoplasm. It carries out the reaction tRNA(Cys) + L-cysteine + ATP = L-cysteinyl-tRNA(Cys) + AMP + diphosphate. This chain is Cysteine--tRNA ligase, found in Geobacter metallireducens (strain ATCC 53774 / DSM 7210 / GS-15).